Reading from the N-terminus, the 327-residue chain is tRNA pseudouridine synthase B (327 aa).

Asp83 acts as the Nucleophile in catalysis.

Belongs to the pseudouridine synthase TruB family. Type 1 subfamily.

The catalysed reaction is uridine(55) in tRNA = pseudouridine(55) in tRNA. Responsible for synthesis of pseudouridine from uracil-55 in the psi GC loop of transfer RNAs. This is tRNA pseudouridine synthase B from Mesomycoplasma hyopneumoniae (strain 232) (Mycoplasma hyopneumoniae).